A 214-amino-acid polypeptide reads, in one-letter code: uncharacterized protein (214 aa).

In terms of biological role, URF2 product may be involved in the transfer of iron-sulfur clusters to the NADH dehydrogenase complex. It may also be required for the assembly of the NADH dehydrogenase complex. This is an uncharacterized protein from Paracoccus denitrificans.